Consider the following 408-residue polypeptide: LysM domain-containing protein ARB_01488 (408 aa).

Positions 1-17 (MVKYALLPLVAVSLVQA) are cleaved as a signal peptide. The 50-residue stretch at 42–91 (SWINVVDASGKLTCDAFLDTINVAKRQFIFWNPQLNSDCSNIQSKASYCA) folds into the LysM 1 domain. The disordered stretch occupies residues 98 to 178 (SKQTRGQMDP…HGPKEAPPPD (81 aa)). Pro residues predominate over residues 106-116 (DPPPKTKPLPP). LysM domains lie at 270-320 (QYHT…RVCV) and 360-406 (SFEL…YACV).

It is found in the secreted. Might have a role in sequestration of chitin oligosaccharides (breakdown products of fungal cell walls that are released during invasion and act as triggers of host immunity) to dampen host defense. This Arthroderma benhamiae (strain ATCC MYA-4681 / CBS 112371) (Trichophyton mentagrophytes) protein is LysM domain-containing protein ARB_01488.